The following is a 255-amino-acid chain: Snake venom serine protease HS112 (255 aa).

The first 18 residues, 1–18 (MVLIRVIANLLILQLSYA), serve as a signal peptide directing secretion. The propeptide occupies 19 to 24 (QKSSEL). Residues 25-246 (VIGGDECDIN…YLPWIQSIIA (222 aa)) form the Peptidase S1 domain. 6 disulfides stabilise this stretch: Cys31–Cys162, Cys49–Cys65, Cys97–Cys253, Cys141–Cys207, Cys173–Cys186, and Cys197–Cys222. Residues His64 and Asp109 each act as charge relay system in the active site. An N-linked (GlcNAc...) asparagine glycan is attached at Asn169. The Charge relay system role is filled by Ser201. A glycan (N-linked (GlcNAc...) asparagine) is linked at Asn248.

It belongs to the peptidase S1 family. Snake venom subfamily. In terms of assembly, monomer. In terms of tissue distribution, expressed by the venom gland.

The protein resides in the secreted. Functionally, snake venom serine protease that may act in the hemostasis system of the prey. The sequence is that of Snake venom serine protease HS112 from Bothrops jararaca (Jararaca).